Here is a 247-residue protein sequence, read N- to C-terminus: 3-deoxy-manno-octulosonate cytidylyltransferase (247 aa).

The protein belongs to the KdsB family.

The protein resides in the cytoplasm. It carries out the reaction 3-deoxy-alpha-D-manno-oct-2-ulosonate + CTP = CMP-3-deoxy-beta-D-manno-octulosonate + diphosphate. Its pathway is nucleotide-sugar biosynthesis; CMP-3-deoxy-D-manno-octulosonate biosynthesis; CMP-3-deoxy-D-manno-octulosonate from 3-deoxy-D-manno-octulosonate and CTP: step 1/1. It functions in the pathway bacterial outer membrane biogenesis; lipopolysaccharide biosynthesis. Its function is as follows. Activates KDO (a required 8-carbon sugar) for incorporation into bacterial lipopolysaccharide in Gram-negative bacteria. The sequence is that of 3-deoxy-manno-octulosonate cytidylyltransferase from Pelodictyon phaeoclathratiforme (strain DSM 5477 / BU-1).